The following is a 59-amino-acid chain: Large ribosomal subunit protein bL32c (59 aa).

Residues 37 to 59 (SRSFSSGNEHPKPKGFSGQQANK) are disordered.

This sequence belongs to the bacterial ribosomal protein bL32 family.

Its subcellular location is the plastid. The protein resides in the chloroplast. This Saccharum hybrid (Sugarcane) protein is Large ribosomal subunit protein bL32c.